The following is a 295-amino-acid chain: MTFKSGFVTIIGRPNVGKSTLMNKIIGEKIAIMSDKPQTTRNKIQCVYTQKDYQIVFLDTPGIHKPKHKLGQYMVKIATETLKEVDAVLFVVDEGNSIGPGDQYIIDQLQGIDTPIILVLNKIDKMNAENLNHLYDQYEKTGIFKHIIGISALEGANVGNLINLIVQYLPEGPKYFPEHMITDQPERLIVAELIREKILHYTDQEIPHGVAVETSLMKRREGKDIIDINATIYCEKKSHKGIIIGKGGRKLKGIGKSAREDIEKLLGSKVYLELWVKVKEDWRNSENTLRTLGYD.

One can recognise an Era-type G domain in the interval 4–171; sequence KSGFVTIIGR…INLIVQYLPE (168 aa). Residues 12–19 are G1; that stretch reads GRPNVGKS. Position 12–19 (12–19) interacts with GTP; it reads GRPNVGKS. Residues 38-42 are G2; it reads QTTRN. The segment at 59-62 is G3; that stretch reads DTPG. Residues 59 to 63 and 121 to 124 contribute to the GTP site; these read DTPGI and NKID. Residues 121–124 form a G4 region; it reads NKID. Positions 150–152 are G5; that stretch reads ISA. The region spanning 194-280 is the KH type-2 domain; it reads IREKILHYTD…YLELWVKVKE (87 aa).

It belongs to the TRAFAC class TrmE-Era-EngA-EngB-Septin-like GTPase superfamily. Era GTPase family. In terms of assembly, monomer.

Its subcellular location is the cytoplasm. The protein resides in the cell membrane. Functionally, an essential GTPase that binds both GDP and GTP, with rapid nucleotide exchange. Plays a role in 16S rRNA processing and 30S ribosomal subunit biogenesis and possibly also in cell cycle regulation and energy metabolism. The protein is GTPase Era of Alkaliphilus oremlandii (strain OhILAs) (Clostridium oremlandii (strain OhILAs)).